A 145-amino-acid polypeptide reads, in one-letter code: Ribosome-binding factor A (145 aa).

The segment at 126–145 is disordered; that stretch reads RDLDTETDAEAGSETTKEED. The span at 130-145 shows a compositional bias: acidic residues; the sequence is TETDAEAGSETTKEED.

It belongs to the RbfA family. As to quaternary structure, monomer. Binds 30S ribosomal subunits, but not 50S ribosomal subunits or 70S ribosomes.

Its subcellular location is the cytoplasm. Functionally, one of several proteins that assist in the late maturation steps of the functional core of the 30S ribosomal subunit. Associates with free 30S ribosomal subunits (but not with 30S subunits that are part of 70S ribosomes or polysomes). Required for efficient processing of 16S rRNA. May interact with the 5'-terminal helix region of 16S rRNA. The polypeptide is Ribosome-binding factor A (Azorhizobium caulinodans (strain ATCC 43989 / DSM 5975 / JCM 20966 / LMG 6465 / NBRC 14845 / NCIMB 13405 / ORS 571)).